The following is a 111-amino-acid chain: Small ribosomal subunit protein uS17 (111 aa).

This sequence belongs to the universal ribosomal protein uS17 family. In terms of assembly, part of the 30S ribosomal subunit.

One of the primary rRNA binding proteins, it binds specifically to the 5'-end of 16S ribosomal RNA. This is Small ribosomal subunit protein uS17 from Archaeoglobus fulgidus (strain ATCC 49558 / DSM 4304 / JCM 9628 / NBRC 100126 / VC-16).